Consider the following 301-residue polypeptide: Protoheme IX farnesyltransferase (301 aa).

The next 9 helical transmembrane spans lie at Val29–Val49, Leu51–Phe71, Ile96–Leu116, Leu123–Leu143, Ile151–Gly171, Ala177–Ile197, Cys223–Met243, Cys244–Trp264, and Phe281–Val301.

The protein belongs to the UbiA prenyltransferase family. Protoheme IX farnesyltransferase subfamily.

The protein resides in the cell inner membrane. It carries out the reaction heme b + (2E,6E)-farnesyl diphosphate + H2O = Fe(II)-heme o + diphosphate. The protein operates within porphyrin-containing compound metabolism; heme O biosynthesis; heme O from protoheme: step 1/1. In terms of biological role, converts heme B (protoheme IX) to heme O by substitution of the vinyl group on carbon 2 of heme B porphyrin ring with a hydroxyethyl farnesyl side group. In Shewanella pealeana (strain ATCC 700345 / ANG-SQ1), this protein is Protoheme IX farnesyltransferase.